Here is a 359-residue protein sequence, read N- to C-terminus: Protein mab-21-like 2 (359 aa).

Belongs to the mab-21 family.

The protein resides in the nucleus. Its subcellular location is the cytoplasm. In terms of biological role, required for eye morphogenesis. May promote the survival of proliferating retinal progenitor cells. This is Protein mab-21-like 2 (mab21l2) from Danio rerio (Zebrafish).